A 100-amino-acid polypeptide reads, in one-letter code: Integration host factor subunit beta (100 aa).

Residues 53-100 (LHHRPPRIGRNPKTGEPVALPGKYVPHFKPGKELRDRVNAGRHNPIQS) form a disordered region. Over residues 82–91 (PGKELRDRVN) the composition is skewed to basic and acidic residues.

Belongs to the bacterial histone-like protein family. Heterodimer of an alpha and a beta chain.

Functionally, this protein is one of the two subunits of integration host factor, a specific DNA-binding protein that functions in genetic recombination as well as in transcriptional and translational control. This Alkalilimnicola ehrlichii (strain ATCC BAA-1101 / DSM 17681 / MLHE-1) protein is Integration host factor subunit beta.